The following is a 916-amino-acid chain: Transmembrane channel-like protein 2-A (916 aa).

Basic and acidic residues predominate over residues 1-13; sequence MPKKSDTTRKLED. Residues 1 to 159 form a disordered region; it reads MPKKSDTTRK…DEEDESMSEG (159 aa). The Cytoplasmic segment spans residues 1 to 271; sequence MPKKSDTTRK…IFLRWMYGMN (271 aa). Over residues 14-26 the composition is skewed to acidic residues; the sequence is VGIEIDGDVDSAE. 2 stretches are compositionally biased toward basic residues: residues 31–45 and 62–72; these read SKGK…GKRG and KGRRAANKKKP. The segment covering 97-107 has biased composition (basic and acidic residues); that stretch reads NVRERGDGDKK. Over residues 108–117 the composition is skewed to basic residues; the sequence is KSGKKGRRGG. Over residues 118-138 the composition is skewed to basic and acidic residues; the sequence is KKNEKGKGKDSDKDSDKDEKK. Acidic residues predominate over residues 145–157; the sequence is DESDSDEEDESMS. The chain crosses the membrane as a helical span at residues 272-292; it reads LVLFSLTFGLVVIPEVLMGLP. Residues 293–344 lie on the Extracellular side of the membrane; the sequence is YGSIPRKTVPREDQDTAMDYSVLTDFNGYCKYSVLFYGYYNNQRTIGFLKFR. A helical membrane pass occupies residues 345–365; the sequence is LPLSYLMVGIGTFGYSLMVVI. At 366–438 the chain is on the cytoplasmic side; that stretch reads RTMAKNADVG…ENIHLRRFLR (73 aa). The chain crosses the membrane as a helical span at residues 439–459; that stretch reads VLANFLITCTLGGSGYLIYFV. The Extracellular segment spans residues 460–478; the sequence is VKRSQEFQNMDNLSWYEKN. The chain crosses the membrane as a helical span at residues 479 to 499; it reads ELEIIMSLLGLVGPMLFETIA. Residues 500–516 lie on the Cytoplasmic side of the membrane; it reads ELEEYHPRIALKWQLGR. A helical membrane pass occupies residues 517 to 537; that stretch reads IFALFLGNLYTFLLALFDEVN. Residues 538–649 lie on the Extracellular side of the membrane; that stretch reads AKLEEEESIK…EFDISGNVLG (112 aa). Residues 650 to 670 traverse the membrane as a helical segment; it reads LVFNQGMIWMGAFYAPGLVGI. Topologically, residues 671–704 are cytoplasmic; that stretch reads NVLRLLSSMYYQCWAVMACNVPHERVFKASKSNN. The helical transmembrane segment at 705–725 threads the bilayer; sequence FYMGLLLLILFLSLLPVVYTI. The Extracellular segment spans residues 726–762; sequence MSLPPSFDCGPFSGKERMFDVVMETIDLDLPAFMGTL. A helical transmembrane segment spans residues 763–783; it reads FGYVANPGLVISAVLLMVLAI. Topologically, residues 784 to 916 are cytoplasmic; sequence YYLNSVSEAY…RGQGPPPRRQ (133 aa). Over residues 804–818 the composition is skewed to basic and acidic residues; it reads MQMARDEEKNRRNNK. Positions 804 to 916 are disordered; sequence MQMARDEEKN…RGQGPPPRRQ (113 aa). Low complexity predominate over residues 883–892; that stretch reads ARGPVTRAPG.

Belongs to the TMC family. As to quaternary structure, interacts (via N-terminus) with both isoforms CD1 and CD3 of PCDH15A (via cytoplasmic domain); this interaction is required for mechanotransduction of the hair cells and correct localization of PCDH15A in hair bundles of the hair cells. In adults, expression is restricted to the hair cells of inner ear and lateral line organ. Expressed at higher levels in the larval inner ear than in the lateral-line neuromasts.

It localises to the cell membrane. It carries out the reaction Ca(2+)(in) = Ca(2+)(out). Its function is as follows. Pore-forming subunit of the mechanotransducer (MET) non-selective cation channel complex located at tips of hair-cell stereocilia. Highly permeable to calcium and likely transports monovalent cations. This is Transmembrane channel-like protein 2-A from Danio rerio (Zebrafish).